The chain runs to 910 residues: Protein translocase subunit SecA (910 aa).

ATP-binding positions include Q86, 104 to 108 (GEGKT), and D508. Residues C894, C896, C905, and C906 each coordinate Zn(2+).

The protein belongs to the SecA family. As to quaternary structure, monomer and homodimer. Part of the essential Sec protein translocation apparatus which comprises SecA, SecYEG and auxiliary proteins SecDF. Other proteins may also be involved. Zn(2+) serves as cofactor.

It localises to the cell membrane. The protein resides in the cytoplasm. It carries out the reaction ATP + H2O + cellular proteinSide 1 = ADP + phosphate + cellular proteinSide 2.. Functionally, part of the Sec protein translocase complex. Interacts with the SecYEG preprotein conducting channel. Has a central role in coupling the hydrolysis of ATP to the transfer of proteins into and across the cell membrane, serving as an ATP-driven molecular motor driving the stepwise translocation of polypeptide chains across the membrane. This is Protein translocase subunit SecA from Acetivibrio thermocellus (strain ATCC 27405 / DSM 1237 / JCM 9322 / NBRC 103400 / NCIMB 10682 / NRRL B-4536 / VPI 7372) (Clostridium thermocellum).